Reading from the N-terminus, the 72-residue chain is MSKEEAIEVEGTVIEPLPNAMFRVELENGHVVLAHISGKMRKYFIKILPGDKVTVELSPYDLSRGRITYRAK.

An S1-like domain is found at M1–K72.

The protein belongs to the IF-1 family. As to quaternary structure, component of the 30S ribosomal translation pre-initiation complex which assembles on the 30S ribosome in the order IF-2 and IF-3, IF-1 and N-formylmethionyl-tRNA(fMet); mRNA recruitment can occur at any time during PIC assembly.

It localises to the cytoplasm. One of the essential components for the initiation of protein synthesis. Stabilizes the binding of IF-2 and IF-3 on the 30S subunit to which N-formylmethionyl-tRNA(fMet) subsequently binds. Helps modulate mRNA selection, yielding the 30S pre-initiation complex (PIC). Upon addition of the 50S ribosomal subunit IF-1, IF-2 and IF-3 are released leaving the mature 70S translation initiation complex. The protein is Translation initiation factor IF-1 of Geobacter metallireducens (strain ATCC 53774 / DSM 7210 / GS-15).